The chain runs to 373 residues: Opsin Rh1 (373 aa).

The Extracellular portion of the chain corresponds to 1-49 (MESFAVAAAQLGPHFAPLSNGSVVDKVTPDMAHLISPYWNQFPAMDPIW). Residue Asn20 is glycosylated (N-linked (GlcNAc...) asparagine). The helical transmembrane segment at 50-74 (AKILTAYMIMIGMISWCGNGVVIYI) threads the bilayer. The Cytoplasmic segment spans residues 75-86 (FATTKSLRTPAN). A helical transmembrane segment spans residues 87–112 (LLVINLAISDFGIMITNTPMMGINLY). Residues 113-126 (FETWVLGPMMCDIY) lie on the Extracellular side of the membrane. Cysteines 123 and 200 form a disulfide. Residues 127-146 (AGLGSAFGCSSIWSMCMISL) traverse the membrane as a helical segment. The Cytoplasmic portion of the chain corresponds to 147-165 (DRYQVIVKGMAGRPMTIPL). A helical transmembrane segment spans residues 166–189 (ALGKIAYIWFMSSIWCLAPAFGWS). Topologically, residues 190–213 (RYVPEGNLTSCGIDYLERDWNPRS) are extracellular. Asn196 carries an N-linked (GlcNAc...) asparagine glycan. The helical transmembrane segment at 214–241 (YLIFYSIFVYYIPLFLICYSYWFIIAAV) threads the bilayer. Residues 242–276 (SAHEKAMREQAKKMNVKSLRSSEDAEKSAEGKLAK) are Cytoplasmic-facing. Residues 277–300 (VALVTITLWFMAWTPYLVINCMGL) form a helical membrane-spanning segment. Topologically, residues 301 to 307 (FKFEGLT) are extracellular. A helical membrane pass occupies residues 308-332 (PLNTIWGACFAKSAACYNPIVYGIS). Lys319 carries the post-translational modification N6-(retinylidene)lysine. At 333–373 (HPKYRLALKEKCPCCVFGKVDDGKSSDAQSQATASEAESKA) the chain is on the cytoplasmic side. The interval 354 to 373 (DGKSSDAQSQATASEAESKA) is disordered. Residues 358–373 (SDAQSQATASEAESKA) show a composition bias toward low complexity.

The protein belongs to the G-protein coupled receptor 1 family. Opsin subfamily. Phosphorylated on some or all of the serine and threonine residues present in the C-terminal region.

It localises to the cell projection. It is found in the rhabdomere membrane. Its function is as follows. Visual pigments are the light-absorbing molecules that mediate vision. They consist of an apoprotein, opsin, covalently linked to cis-retinal. In Drosophila melanogaster (Fruit fly), this protein is Opsin Rh1 (ninaE).